Here is a 293-residue protein sequence, read N- to C-terminus: MTEDSQRNFRSVYYEKVGFRGVEEKKSLEILLKDDRLDTEKLCTFSQRFPLPSMYRALVWKVLLGILPPHHESHAKVMMYRKEQYLDVLHALKVVRFVSDATPQAEVYLRMYQLESGKLPRSPSFPLEPDDEVFLAIAKAMEEMVEDSVDCYWITRRFVNQLNTKYRDSLPQLPKAFEQYLNLEDGRLLTHLRMCSAAPKLPYDLWFKRCFAGCLPESSLQRVWDKVVSGSCKILVFVAVEILLTFKIKVMALNSAEKITKFLENIPQDSSDAIVSKAIDLWHKHCGTPVHSS.

One can recognise a Rab-GAP TBC domain in the interval 50-231; sequence PLPSMYRALV…RVWDKVVSGS (182 aa).

In terms of assembly, component of the TSC-TBC complex (also named Rhebulator complex), composed of 2 molecules of TSC1, 2 molecules of TSC2 and 1 molecule of TBC1D7. Interacts with TSC1 (via C-terminal half of the coiled-coil domain). Highly expressed in heart, and slightly in kidney, liver and placenta.

It is found in the lysosome membrane. The protein localises to the cytoplasmic vesicle. Its subcellular location is the cytoplasm. It localises to the cytosol. In terms of biological role, non-catalytic component of the TSC-TBC complex, a multiprotein complex that acts as a negative regulator of the canonical mTORC1 complex, an evolutionarily conserved central nutrient sensor that stimulates anabolic reactions and macromolecule biosynthesis to promote cellular biomass generation and growth. The TSC-TBC complex acts as a GTPase-activating protein (GAP) for the small GTPase RHEB, a direct activator of the protein kinase activity of mTORC1. In absence of nutrients, the TSC-TBC complex inhibits mTORC1, thereby preventing phosphorylation of ribosomal protein S6 kinase (RPS6KB1 and RPS6KB2) and EIF4EBP1 (4E-BP1) by the mTORC1 signaling. The TSC-TBC complex is inactivated in response to nutrients, relieving inhibition of mTORC1. The polypeptide is TBC1 domain family member 7 (Homo sapiens (Human)).